The following is an 889-amino-acid chain: Alanine--tRNA ligase (889 aa).

His-569, His-573, Cys-671, and His-675 together coordinate Zn(2+).

It belongs to the class-II aminoacyl-tRNA synthetase family. Zn(2+) serves as cofactor.

It is found in the cytoplasm. The enzyme catalyses tRNA(Ala) + L-alanine + ATP = L-alanyl-tRNA(Ala) + AMP + diphosphate. Its function is as follows. Catalyzes the attachment of alanine to tRNA(Ala) in a two-step reaction: alanine is first activated by ATP to form Ala-AMP and then transferred to the acceptor end of tRNA(Ala). Also edits incorrectly charged Ser-tRNA(Ala) and Gly-tRNA(Ala) via its editing domain. The chain is Alanine--tRNA ligase from Synechococcus sp. (strain CC9605).